Reading from the N-terminus, the 501-residue chain is ATP-dependent rRNA helicase RRP3 (501 aa).

A coiled-coil region spans residues 3–44 (KIVKRKEKKANDELTSLAEKIRAKALENQKKLIEAEKEGGSE). The interval 36-79 (EAEKEGGSESDSEEDATAEKKKVLKSKSKSTVSTQNENTNEDES) is disordered. Phosphoserine occurs at positions 43, 45, and 47. The short motif at 81 to 109 (ESFSELNLVPELIQACKNLNYSKPTPIQS) is the Q motif element. Residues 112–284 (IPPALEGHDI…RASLTNPVKC (173 aa)) form the Helicase ATP-binding domain. 125–132 (AQTGSGKT) serves as a coordination point for ATP. Positions 231–234 (DEAD) match the DEAD box motif. Positions 307–461 (LKNTYLIYLL…NIILTLRDSV (155 aa)) constitute a Helicase C-terminal domain. The tract at residues 480 to 501 (IARGKGRRGRMMTRENMDMGER) is disordered. Over residues 491–501 (MTRENMDMGER) the composition is skewed to basic and acidic residues.

It belongs to the DEAD box helicase family. DDX47/RRP3 subfamily. In terms of assembly, interacts with the SSU processome.

The protein resides in the nucleus. The catalysed reaction is ATP + H2O = ADP + phosphate + H(+). With respect to regulation, ATPase activity is stimulated upon the addition of RNA. ATP-dependent rRNA helicase required for pre-ribosomal RNA processing. Involved in the maturation of the 35S-pre-rRNA and to its cleavage to mature 18S rRNA. The sequence is that of ATP-dependent rRNA helicase RRP3 from Saccharomyces cerevisiae (strain ATCC 204508 / S288c) (Baker's yeast).